The following is a 388-amino-acid chain: Alcohol dehydrogenase patD (388 aa).

Zn(2+) is bound at residue Cys-46. NAD(+) is bound at residue His-47. Residues His-67, Glu-68, Cys-101, Cys-104, and Cys-112 each contribute to the Zn(2+) site. Residue His-67 participates in substrate binding. Residues 198 to 203 (VALSRG), 295 to 297 (SLL), and 320 to 322 (EEA) contribute to the NAD(+) site.

It belongs to the zinc-containing alcohol dehydrogenase family. It depends on Zn(2+) as a cofactor.

It localises to the cytoplasm. The protein resides in the cytosol. It carries out the reaction neopatulin + NADPH + H(+) = (E)-ascladiol + NADP(+). It functions in the pathway mycotoxin biosynthesis; patulin biosynthesis. Functionally, alcohol dehydrogenase; part of the gene cluster that mediates the biosynthesis of patulin, an acetate-derived tetraketide mycotoxin produced by several fungal species that shows antimicrobial properties against several bacteria. PatD catalyzes the conversion of neopatulin into E-ascladiol. The pathway begins with the synthesis of 6-methylsalicylic acid by the polyketide synthase (PKS) patK via condensation of acetate and malonate units. The 6-methylsalicylic acid decarboxylase patG then catalyzes the decarboxylation of 6-methylsalicylic acid to yield m-cresol (also known as 3-methylphenol). These first reactions occur in the cytosol. The intermediate m-cresol is then transported into the endoplasmic reticulum where the cytochrome P450 monooxygenase patH converts it to m-hydroxybenzyl alcohol, which is further converted to gentisyl alcohol by the cytochrome P450 monooxygenase patI. The oxidoreductases patJ and patO further convert gentisyl alcohol to isoepoxydon in the vacuole. PatN catalyzes then the transformation of isoepoxydon into phyllostine. The cluster protein patF is responsible for the conversion from phyllostine to neopatulin whereas the alcohol dehydrogenase patD converts neopatulin to E-ascladiol. The steps between isoepoxydon and E-ascladiol occur in the cytosol, and E-ascladiol is probably secreted to the extracellular space by one of the cluster-specific transporters patC or patM. Finally, the secreted patulin synthase patE catalyzes the conversion of E-ascladiol to patulin. The sequence is that of Alcohol dehydrogenase patD from Aspergillus clavatus (strain ATCC 1007 / CBS 513.65 / DSM 816 / NCTC 3887 / NRRL 1 / QM 1276 / 107).